Here is a 205-residue protein sequence, read N- to C-terminus: Octanoyltransferase (205 aa).

Positions 29–204 constitute a BPL/LPL catalytic domain; the sequence is AETPDEIWIV…HLLQQLDQKN (176 aa). Substrate is bound by residues 68 to 75, 135 to 137, and 148 to 150; these read RGGQVTYH, ALG, and GVS. C166 (acyl-thioester intermediate) is an active-site residue.

This sequence belongs to the LipB family.

Its subcellular location is the cytoplasm. It carries out the reaction octanoyl-[ACP] + L-lysyl-[protein] = N(6)-octanoyl-L-lysyl-[protein] + holo-[ACP] + H(+). The protein operates within protein modification; protein lipoylation via endogenous pathway; protein N(6)-(lipoyl)lysine from octanoyl-[acyl-carrier-protein]: step 1/2. Functionally, catalyzes the transfer of endogenously produced octanoic acid from octanoyl-acyl-carrier-protein onto the lipoyl domains of lipoate-dependent enzymes. Lipoyl-ACP can also act as a substrate although octanoyl-ACP is likely to be the physiological substrate. The polypeptide is Octanoyltransferase (Dechloromonas aromatica (strain RCB)).